Consider the following 373-residue polypeptide: Queuine tRNA-ribosyltransferase (373 aa).

Asp89 functions as the Proton acceptor in the catalytic mechanism. Residues 89-93 (DSGGF), Asp143, Gln187, and Gly214 contribute to the substrate site. The segment at 245–251 (GVGKPED) is RNA binding. The Nucleophile role is filled by Asp264. Positions 269–273 (TRNAR) are RNA binding; important for wobble base 34 recognition. The Zn(2+) site is built by Cys302, Cys304, Cys307, and His333.

It belongs to the queuine tRNA-ribosyltransferase family. Homodimer. Within each dimer, one monomer is responsible for RNA recognition and catalysis, while the other monomer binds to the replacement base PreQ1. Zn(2+) serves as cofactor.

It catalyses the reaction 7-aminomethyl-7-carbaguanine + guanosine(34) in tRNA = 7-aminomethyl-7-carbaguanosine(34) in tRNA + guanine. Its pathway is tRNA modification; tRNA-queuosine biosynthesis. In terms of biological role, catalyzes the base-exchange of a guanine (G) residue with the queuine precursor 7-aminomethyl-7-deazaguanine (PreQ1) at position 34 (anticodon wobble position) in tRNAs with GU(N) anticodons (tRNA-Asp, -Asn, -His and -Tyr). Catalysis occurs through a double-displacement mechanism. The nucleophile active site attacks the C1' of nucleotide 34 to detach the guanine base from the RNA, forming a covalent enzyme-RNA intermediate. The proton acceptor active site deprotonates the incoming PreQ1, allowing a nucleophilic attack on the C1' of the ribose to form the product. After dissociation, two additional enzymatic reactions on the tRNA convert PreQ1 to queuine (Q), resulting in the hypermodified nucleoside queuosine (7-(((4,5-cis-dihydroxy-2-cyclopenten-1-yl)amino)methyl)-7-deazaguanosine). This is Queuine tRNA-ribosyltransferase from Tolumonas auensis (strain DSM 9187 / NBRC 110442 / TA 4).